The sequence spans 338 residues: Phosphate acyltransferase (338 aa).

This sequence belongs to the PlsX family. In terms of assembly, homodimer. Probably interacts with PlsY.

It is found in the cytoplasm. It catalyses the reaction a fatty acyl-[ACP] + phosphate = an acyl phosphate + holo-[ACP]. The protein operates within lipid metabolism; phospholipid metabolism. Functionally, catalyzes the reversible formation of acyl-phosphate (acyl-PO(4)) from acyl-[acyl-carrier-protein] (acyl-ACP). This enzyme utilizes acyl-ACP as fatty acyl donor, but not acyl-CoA. This chain is Phosphate acyltransferase, found in Endomicrobium trichonymphae.